Consider the following 402-residue polypeptide: Arabinosyltransferase RRA1 (402 aa).

Residues 1–13 lie on the Cytoplasmic side of the membrane; sequence MAVRKEKVQPFRE. The chain crosses the membrane as a helical; Signal-anchor for type II membrane protein span at residues 14–34; that stretch reads CGIAIAVLVGIFIGCVCTILI. Topologically, residues 35-402 are lumenal; that stretch reads PNDFVNFRSS…DALDRFRDGS (368 aa). Residues 225-227 carry the DXD motif motif; it reads DVD. A glycan (N-linked (GlcNAc...) asparagine) is linked at Asn253.

This sequence belongs to the glycosyltransferase 77 family. In terms of tissue distribution, expressed in leaf meristem and at points of cauline leaf attachments on the primary stem. Expressed at low levels in siliques.

It is found in the golgi apparatus membrane. Plays a role in the arabinosylation of cell wall components. Involved in the arabinosylation of extensin proteins in root hair cells. Extensins are structural glycoproteins present in cell walls and its arabinosylation is important for root hair cell development. The chain is Arabinosyltransferase RRA1 from Arabidopsis thaliana (Mouse-ear cress).